The sequence spans 283 residues: 4-diphosphocytidyl-2-C-methyl-D-erythritol kinase (283 aa).

Residue lysine 10 is part of the active site. 99–109 (PMGGGLGGGSS) contributes to the ATP binding site. Residue aspartate 141 is part of the active site.

Belongs to the GHMP kinase family. IspE subfamily. As to quaternary structure, homodimer.

The catalysed reaction is 4-CDP-2-C-methyl-D-erythritol + ATP = 4-CDP-2-C-methyl-D-erythritol 2-phosphate + ADP + H(+). Its pathway is isoprenoid biosynthesis; isopentenyl diphosphate biosynthesis via DXP pathway; isopentenyl diphosphate from 1-deoxy-D-xylulose 5-phosphate: step 3/6. Functionally, catalyzes the phosphorylation of the position 2 hydroxy group of 4-diphosphocytidyl-2C-methyl-D-erythritol. The chain is 4-diphosphocytidyl-2-C-methyl-D-erythritol kinase from Escherichia coli O7:K1 (strain IAI39 / ExPEC).